We begin with the raw amino-acid sequence, 429 residues long: Small ribosomal subunit protein uS5m (429 aa).

The disordered stretch occupies residues 108–127 (AGAKKGRGKRTKKKKRKDLN). Basic residues predominate over residues 111 to 125 (KKGRGKRTKKKKRKD). The S5 DRBM domain occupies 218–282 (FDTRILEVRN…NRAVHHLYYI (65 aa)).

It belongs to the universal ribosomal protein uS5 family. As to quaternary structure, component of the mitochondrial ribosome small subunit (28S) which comprises a 12S rRNA and about 30 distinct proteins.

Its subcellular location is the mitochondrion. The protein is Small ribosomal subunit protein uS5m (MRPS5) of Pongo abelii (Sumatran orangutan).